The sequence spans 362 residues: UDP-N-acetylglucosamine--N-acetylmuramyl-(pentapeptide) pyrophosphoryl-undecaprenol N-acetylglucosamine transferase (362 aa).

Residues 14–16 (TGG), Asn-122, Arg-163, Ser-190, and Gln-285 each bind UDP-N-acetyl-alpha-D-glucosamine.

Belongs to the glycosyltransferase 28 family. MurG subfamily.

The protein resides in the cell inner membrane. It catalyses the reaction di-trans,octa-cis-undecaprenyl diphospho-N-acetyl-alpha-D-muramoyl-L-alanyl-D-glutamyl-meso-2,6-diaminopimeloyl-D-alanyl-D-alanine + UDP-N-acetyl-alpha-D-glucosamine = di-trans,octa-cis-undecaprenyl diphospho-[N-acetyl-alpha-D-glucosaminyl-(1-&gt;4)]-N-acetyl-alpha-D-muramoyl-L-alanyl-D-glutamyl-meso-2,6-diaminopimeloyl-D-alanyl-D-alanine + UDP + H(+). It functions in the pathway cell wall biogenesis; peptidoglycan biosynthesis. Cell wall formation. Catalyzes the transfer of a GlcNAc subunit on undecaprenyl-pyrophosphoryl-MurNAc-pentapeptide (lipid intermediate I) to form undecaprenyl-pyrophosphoryl-MurNAc-(pentapeptide)GlcNAc (lipid intermediate II). The polypeptide is UDP-N-acetylglucosamine--N-acetylmuramyl-(pentapeptide) pyrophosphoryl-undecaprenol N-acetylglucosamine transferase (Prochlorococcus marinus (strain MIT 9215)).